The sequence spans 246 residues: Probable ABC transporter permease protein BMEII0107 (246 aa).

A run of 6 helical transmembrane segments spans residues 12 to 32 (LLSFAVGIGGWYLLTATGAVV), 63 to 83 (VLSGFVLGVALAIPVGFLMGW), 94 to 114 (WVQFFRMIPPLAVIPLAIVTL), 122 to 142 (IFVIFLASFLSSVVATYQGVI), 172 to 192 (VPFILVGVRIGLGSAWATVVA), and 211 to 231 (LYYDLPTIFVSLVTIGILGLF). The ABC transmembrane type-1 domain occupies 56 to 236 (IFASLRRVLS…ILGLFMDRLL (181 aa)).

Belongs to the binding-protein-dependent transport system permease family. As to quaternary structure, the complex is composed of two ATP-binding proteins (BMEII0108), two transmembrane proteins (BMEII0107) and a solute-binding protein (BMEII0109).

Its subcellular location is the cell inner membrane. Probably part of an ABC transporter complex. Probably responsible for the translocation of the substrate across the membrane. This chain is Probable ABC transporter permease protein BMEII0107, found in Brucella melitensis biotype 1 (strain ATCC 23456 / CCUG 17765 / NCTC 10094 / 16M).